The sequence spans 725 residues: uncharacterized protein (725 aa).

A FtsK domain is found at 363 to 556 (GTYVEIPLYS…FVTTRPEDSC (194 aa)). 382–389 (GRTRGGKS) is an ATP binding site.

It belongs to the FtsK/SpoIIIE/SftA family.

Its function is as follows. Probable DNA motor protein. May track DNA in a ATP-dependent manner by generating positive supercoils in front of it and negative supercoils behind it. This is an uncharacterized protein from Nostoc sp. (strain PCC 7120 / SAG 25.82 / UTEX 2576).